The primary structure comprises 260 residues: MSFVHQKCRNIDTVYLGSNIHRLNVPDNLVKWSQEWSGYNPPAHTDPKVDGAVWADPEIDEKTFQPSWNAIDGKINRVSYVCQYSFDPVTLRPLNPIGRTGLSGRGLLGRWGPNHAADPIVSRTNDNGDLEFVAVQRHDNGEWAIPGGMVDAGEHVSQTLRREFAEEAMHGIVDSENLDELWNNGKELYRGYVDDPRNTDNAWMETVVFNFHDSKGLLKNVALQAGDDAKALRWIAVNSNEPLYASHSHFIDLLKESHSH.

A Nudix hydrolase domain is found at 113–257 (PNHAADPIVS…SHFIDLLKES (145 aa)). A Nudix box motif is present at residues 148-170 (GMVDAGEHVSQTLRREFAEEAMH). Residues Glu163 and Glu167 each contribute to the Mg(2+) site.

It belongs to the Nudix hydrolase family. Mg(2+) is required as a cofactor. Mn(2+) serves as cofactor.

In terms of biological role, probably mediates the hydrolysis of some nucleoside diphosphate derivatives. In Caenorhabditis elegans, this protein is Putative nudix hydrolase 6 (ndx-6).